We begin with the raw amino-acid sequence, 132 residues long: MKIIYFSFTGNVRRFIKRTELENTLEITAENCMEPVHEPFIIVTGTIGFGEVPEPVQSFLEVNHQYIRGVAASGNRNWGLNFAKAGRTISEEYNVPLLMKFELHGKNKDVIEFKNKVGNFNENHGREKVQSY.

The protein belongs to the NrdI family.

In terms of biological role, probably involved in ribonucleotide reductase function. The sequence is that of Protein NrdI from Staphylococcus aureus (strain Mu3 / ATCC 700698).